The chain runs to 326 residues: Protein BCCIP homolog (326 aa).

The segment at 37 to 81 is disordered; sequence SHPEDCQCSDEDISFDEKQKIPNLPRKGKEEQVSDSSDEEDSQED. Ser45 is modified (phosphoserine). A compositionally biased stretch (acidic residues) spans 72–81; it reads SSDEEDSQED.

It belongs to the BCP1 family.

The polypeptide is Protein BCCIP homolog (Arabidopsis thaliana (Mouse-ear cress)).